Consider the following 110-residue polypeptide: UPF0122 protein SaurJH9_1295 (110 aa).

It belongs to the UPF0122 family.

Functionally, might take part in the signal recognition particle (SRP) pathway. This is inferred from the conservation of its genetic proximity to ftsY/ffh. May be a regulatory protein. The protein is UPF0122 protein SaurJH9_1295 of Staphylococcus aureus (strain JH9).